Reading from the N-terminus, the 290-residue chain is GTPase Era (290 aa).

The 143-residue stretch at 2–144 (KVLKVGVLGP…AIILEEFKPQ (143 aa)) folds into the Era-type G domain. A G1 region spans residues 10–17 (GPTNAGKS). 10-17 (GPTNAGKS) contributes to the GTP binding site. Positions 36 to 40 (NTTLL) are G2. The tract at residues 58–61 (DVPG) is G3. 58-62 (DVPGF) is a binding site for GTP. The G4 stretch occupies residues 97-100 (NKIE). The G5 stretch occupies residues 121-123 (INK). 122 to 125 (NKFH) is a binding site for GTP. The KH type-2 domain occupies 201–279 (CKNEIPHIAR…FIDIFVKTEK (79 aa)).

This sequence belongs to the TRAFAC class TrmE-Era-EngA-EngB-Septin-like GTPase superfamily. Era GTPase family. Monomer.

It is found in the cytoplasm. The protein resides in the cell membrane. Functionally, an essential GTPase that binds both GDP and GTP, with rapid nucleotide exchange. Plays a role in 16S rRNA processing and 30S ribosomal subunit biogenesis and possibly also in cell cycle regulation and energy metabolism. The sequence is that of GTPase Era from Mycoplasma genitalium (strain ATCC 33530 / DSM 19775 / NCTC 10195 / G37) (Mycoplasmoides genitalium).